A 62-amino-acid polypeptide reads, in one-letter code: Bacteriocin lactacin-F subunit LafX (62 aa).

A propeptide spanning residues 1–14 (MKLNDKELSKIVGG) is cleaved from the precursor.

The protein belongs to the bacteriocin class IIB family. This bacteriocin depends upon the complementation of two peptides for activity: LafA and LafX. Associated with a 180 kDa bacteriocin complex.

Heat stable bacteriocin active against Enterococcus faecalis and other Lactobacilli. This is Bacteriocin lactacin-F subunit LafX (lafX) from Lactobacillus johnsonii (strain CNCM I-12250 / La1 / NCC 533).